Here is a 514-residue protein sequence, read N- to C-terminus: 2,3-bisphosphoglycerate-independent phosphoglycerate mutase (514 aa).

Residues Asp-14 and Ser-64 each coordinate Mn(2+). Ser-64 functions as the Phosphoserine intermediate in the catalytic mechanism. Substrate contacts are provided by residues His-125, 155–156, Arg-187, Arg-193, 263–266, and Lys-337; these read RD and RADR. Asp-404, His-408, Asp-445, His-446, and His-464 together coordinate Mn(2+).

Belongs to the BPG-independent phosphoglycerate mutase family. Monomer. Mn(2+) is required as a cofactor.

The catalysed reaction is (2R)-2-phosphoglycerate = (2R)-3-phosphoglycerate. It participates in carbohydrate degradation; glycolysis; pyruvate from D-glyceraldehyde 3-phosphate: step 3/5. Its function is as follows. Catalyzes the interconversion of 2-phosphoglycerate and 3-phosphoglycerate. This is 2,3-bisphosphoglycerate-independent phosphoglycerate mutase from Serratia proteamaculans (strain 568).